An 843-amino-acid polypeptide reads, in one-letter code: Envelope glycoprotein gp160 (843 aa).

Positions 1–33 are cleaved as a signal peptide; it reads MRVREMQRNWQHLGKWGLLFLGILIICNANATD. Residue N30 is glycosylated (N-linked (GlcNAc...) asparagine; by host). The Extracellular segment spans residues 34-671; it reads DLWVTVYYGV…ITNWLWYIKI (638 aa). C55 and C75 form a disulfide bridge. N-linked (GlcNAc...) asparagine; by host glycosylation is found at N89, N131, N136, N143, N156, N160, N186, N197, N234, N262, N276, N289, N301, N333, N338, N343, N353, and N359. 5 cysteine pairs are disulfide-bonded: C120-C205, C127-C196, C132-C157, C218-C247, and C228-C239. A V1 region spans residues 132–156; the sequence is CTDVNITMSDINGTSLKEDQGEIKN. The interval 157–196 is V2; sequence CSFNVTTELKDKKRKQQALFYRLDVEPIKNSSNIYKLISC. A V3 region spans residues 296-329; sequence CRRPNNNTRKGIRIGPGQTFFATGEIIGDIRKAY. A disulfide bridge connects residues C296 and C330. The interval 361 to 371 is CD4-binding loop; that stretch reads SSGGDVEITTH. Residues C375 and C432 are joined by a disulfide bond. Residues 382–405 are V4; the sequence is YNTSGLFNETEVANNTNENITLPC. Residues N383, N389, N395, N400, and N435 are each glycosylated (N-linked (GlcNAc...) asparagine; by host). V5 regions lie at residues 448–458 and 450–458; these read DIDGKEILRPI and DGKEILRPI. The fusion peptide stretch occupies residues 499–519; the sequence is AVGMGAVLFGFLGAAGSTMGA. The interval 561 to 579 is immunosuppression; it reads KQLQARILAVERYLKDQQL. A disulfide bridge links C585 with C591. N-linked (GlcNAc...) asparagine; by host glycans are attached at residues N598, N603, N612, and N624. Residues 620-654 adopt a coiled-coil conformation; the sequence is KEIDNYTKTIYSLIEDAQNQQERNEQELLALDKWD. An MPER; binding to GalCer region spans residues 649–670; the sequence is ALDKWDSLWSWFSITNWLWYIK. Residues 672–692 form a helical membrane-spanning segment; it reads FIMIVGGLIGLRIVFAVLSVV. Residues 693 to 843 are Cytoplasmic-facing; that stretch reads NRVRQGYSPL…IRQGAERFLL (151 aa). Residues 699–702 carry the YXXL motif; contains endocytosis signal motif; sequence YSPL. Positions 709 to 731 are disordered; the sequence is PNPRGPDRPGGIEEEGGEPDRDR. A lipid anchor (S-palmitoyl cysteine; by host) is attached at C751. Residues 842–843 carry the Di-leucine internalization motif motif; sequence LL.

It belongs to the HIV-1 env protein family. The mature envelope protein (Env) consists of a homotrimer of non-covalently associated gp120-gp41 heterodimers. The resulting complex protrudes from the virus surface as a spike. There seems to be as few as 10 spikes on the average virion. Interacts with host CD4, CCR5 and CXCR4. Gp120 also interacts with the C-type lectins CD209/DC-SIGN and CLEC4M/DC-SIGNR (collectively referred to as DC-SIGN(R)). Gp120 and gp41 interact with GalCer. Gp120 interacts with host ITGA4/ITGB7 complex; on CD4+ T-cells, this interaction results in rapid activation of integrin ITGAL/LFA-1, which facilitates efficient cell-to-cell spreading of HIV-1. Gp120 interacts with cell-associated heparan sulfate; this interaction increases virus infectivity on permissive cells and may be involved in infection of CD4- cells. In terms of assembly, the mature envelope protein (Env) consists of a homotrimer of non-covalently associated gp120-gp41 heterodimers. The resulting complex protrudes from the virus surface as a spike. There seems to be as few as 10 spikes on the average virion. Post-translationally, highly glycosylated by host. The high number of glycan on the protein is reffered to as 'glycan shield' because it contributes to hide protein sequence from adaptive immune system. Palmitoylation of the transmembrane protein and of Env polyprotein (prior to its proteolytic cleavage) is essential for their association with host cell membrane lipid rafts. Palmitoylation is therefore required for envelope trafficking to classical lipid rafts, but not for viral replication. In terms of processing, specific enzymatic cleavages in vivo yield mature proteins. Envelope glycoproteins are synthesized as an inactive precursor that is heavily N-glycosylated and processed likely by host cell furin in the Golgi to yield the mature SU and TM proteins. The cleavage site between SU and TM requires the minimal sequence [KR]-X-[KR]-R. About 2 of the 9 disulfide bonds of gp41 are reduced by P4HB/PDI, following binding to CD4 receptor.

It is found in the virion membrane. The protein localises to the host cell membrane. Its subcellular location is the host endosome membrane. Its function is as follows. Oligomerizes in the host endoplasmic reticulum into predominantly trimers. In a second time, gp160 transits in the host Golgi, where glycosylation is completed. The precursor is then proteolytically cleaved in the trans-Golgi and thereby activated by cellular furin or furin-like proteases to produce gp120 and gp41. Functionally, attaches the virus to the host lymphoid cell by binding to the primary receptor CD4. This interaction induces a structural rearrangement creating a high affinity binding site for a chemokine coreceptor like CXCR4 and/or CCR5. Acts as a ligand for CD209/DC-SIGN and CLEC4M/DC-SIGNR, which are respectively found on dendritic cells (DCs), and on endothelial cells of liver sinusoids and lymph node sinuses. These interactions allow capture of viral particles at mucosal surfaces by these cells and subsequent transmission to permissive cells. HIV subverts the migration properties of dendritic cells to gain access to CD4+ T-cells in lymph nodes. Virus transmission to permissive T-cells occurs either in trans (without DCs infection, through viral capture and transmission), or in cis (following DCs productive infection, through the usual CD4-gp120 interaction), thereby inducing a robust infection. In trans infection, bound virions remain infectious over days and it is proposed that they are not degraded, but protected in non-lysosomal acidic organelles within the DCs close to the cell membrane thus contributing to the viral infectious potential during DCs' migration from the periphery to the lymphoid tissues. On arrival at lymphoid tissues, intact virions recycle back to DCs' cell surface allowing virus transmission to CD4+ T-cells. Acts as a class I viral fusion protein. Under the current model, the protein has at least 3 conformational states: pre-fusion native state, pre-hairpin intermediate state, and post-fusion hairpin state. During fusion of viral and target intracellular membranes, the coiled coil regions (heptad repeats) assume a trimer-of-hairpins structure, positioning the fusion peptide in close proximity to the C-terminal region of the ectodomain. The formation of this structure appears to drive apposition and subsequent fusion of viral and target cell membranes. Complete fusion occurs in host cell endosomes and is dynamin-dependent, however some lipid transfer might occur at the plasma membrane. The virus undergoes clathrin-dependent internalization long before endosomal fusion, thus minimizing the surface exposure of conserved viral epitopes during fusion and reducing the efficacy of inhibitors targeting these epitopes. Membranes fusion leads to delivery of the nucleocapsid into the cytoplasm. The sequence is that of Envelope glycoprotein gp160 from Homo sapiens (Human).